Consider the following 446-residue polypeptide: Amino-acid acetyltransferase (446 aa).

Residues 299–438 (EQVRDAEIDD…QKLYNFQRKS (140 aa)) form the N-acetyltransferase domain.

Belongs to the acetyltransferase family. ArgA subfamily.

It is found in the cytoplasm. It carries out the reaction L-glutamate + acetyl-CoA = N-acetyl-L-glutamate + CoA + H(+). Its pathway is amino-acid biosynthesis; L-arginine biosynthesis; N(2)-acetyl-L-ornithine from L-glutamate: step 1/4. In Aliivibrio fischeri (strain ATCC 700601 / ES114) (Vibrio fischeri), this protein is Amino-acid acetyltransferase.